Reading from the N-terminus, the 204-residue chain is Pyridoxal 5'-phosphate synthase subunit PdxT (204 aa).

52–54 (GES) provides a ligand contact to L-glutamine. The Nucleophile role is filled by cysteine 84. Residues arginine 116 and 143 to 144 (IR) each bind L-glutamine. Active-site charge relay system residues include histidine 184 and glutamate 186.

This sequence belongs to the glutaminase PdxT/SNO family. In the presence of PdxS, forms a dodecamer of heterodimers. Only shows activity in the heterodimer.

The catalysed reaction is aldehydo-D-ribose 5-phosphate + D-glyceraldehyde 3-phosphate + L-glutamine = pyridoxal 5'-phosphate + L-glutamate + phosphate + 3 H2O + H(+). The enzyme catalyses L-glutamine + H2O = L-glutamate + NH4(+). It participates in cofactor biosynthesis; pyridoxal 5'-phosphate biosynthesis. In terms of biological role, catalyzes the hydrolysis of glutamine to glutamate and ammonia as part of the biosynthesis of pyridoxal 5'-phosphate. The resulting ammonia molecule is channeled to the active site of PdxS. This is Pyridoxal 5'-phosphate synthase subunit PdxT from Pyrobaculum arsenaticum (strain DSM 13514 / JCM 11321 / PZ6).